Reading from the N-terminus, the 248-residue chain is MRTPIIAGNWKMHYTIDEAVKLVEELKPLVKDAKCEVVVCPTFVCLDAVKKAVEGTNIKVGAQNMHFEEKGAFTGEIAPRMLEAMNIDYVIIGHSERREYFNETDETCNKKVKAAFAHNLTPILCCGETLEQRENGTTNDVIKAQITADLEGLTKEQAEKVVIAYEPIWAIGTGKTATSDQANETIAAIRAMVAEMFGQEVADKVRIQYGGSVKPNTIAEQMAKSDIDGALVGGASLVAADFAQIVNY.

9 to 11 (NWK) lines the substrate pocket. Histidine 94 acts as the Electrophile in catalysis. Catalysis depends on glutamate 166, which acts as the Proton acceptor. Residues glycine 172, serine 212, and 233–234 (GG) contribute to the substrate site.

It belongs to the triosephosphate isomerase family. In terms of assembly, homodimer.

It is found in the cytoplasm. It catalyses the reaction D-glyceraldehyde 3-phosphate = dihydroxyacetone phosphate. It participates in carbohydrate biosynthesis; gluconeogenesis. Its pathway is carbohydrate degradation; glycolysis; D-glyceraldehyde 3-phosphate from glycerone phosphate: step 1/1. In terms of biological role, involved in the gluconeogenesis. Catalyzes stereospecifically the conversion of dihydroxyacetone phosphate (DHAP) to D-glyceraldehyde-3-phosphate (G3P). The protein is Triosephosphate isomerase of Clostridium perfringens (strain ATCC 13124 / DSM 756 / JCM 1290 / NCIMB 6125 / NCTC 8237 / Type A).